The sequence spans 596 residues: Bromodomain-containing protein 9 (596 aa).

Residues 1-10 are compositionally biased toward basic residues; it reads MGKKHKKHKA. Disordered regions lie at residues 1 to 26 and 38 to 137; these read MGKK…PLEK and EVTE…AENE. Positions 50–62 are enriched in basic and acidic residues; it reads SYYDDRSDHERER. Position 56 is a phosphoserine (Ser-56). A compositionally biased stretch (basic residues) spans 63 to 73; it reads HREKKKKKKKK. The segment covering 74 to 85 has biased composition (basic and acidic residues); sequence SEKEKHLDEEER. Basic residues predominate over residues 86–97; sequence RKRKEEKKRKRE. Over residues 111–126 the composition is skewed to basic and acidic residues; it reads DPGKKVEVEPPPDRPV. A Bromo domain is found at 136–240; sequence NESTPIQRLL…HAGFKMMSKA (105 aa). The segment at 214–216 is histone H4K5ac H4K8ac and histone H4K5bu H4K8bu binding; it reads TYN. N6-acetyllysine; alternate is present on Lys-372. Residue Lys-372 forms a Glycyl lysine isopeptide (Lys-Gly) (interchain with G-Cter in SUMO2); alternate linkage. The disordered stretch occupies residues 536–596; sequence AQAERGGSRP…SPEPAAPAKN (61 aa). Low complexity predominate over residues 543–555; it reads SRPSSNLSSLSTA. Phosphoserine is present on residues Ser-565 and Ser-587.

As to quaternary structure, binds acetylated histones H3 and H4. Binds butyrylated histone H4. Component of the multiprotein chromatin-remodeling subcomplex SWI/SNF called GBAF, which includes at least BICRA or BICRAL (mutually exclusive), BRD9, SS18, the core BAF subunits, SMARCA2/BRM, SMARCA4/BRG1/BAF190A, ACTL6A/BAF53, SMARCC1/BAF155, and SMARCD1/BAF60A. Interacts (via N-terminal bromodomain) with acetylated RAD54. Interacts (via C-terminus) with RAD51.

The protein localises to the nucleus. Plays a role in chromatin remodeling and regulation of transcription. Acts as a chromatin reader that recognizes and binds acylated histones: binds histones that are acetylated and/or butyrylated. Component of SWI/SNF chromatin remodeling subcomplex GBAF that carries out key enzymatic activities, changing chromatin structure by altering DNA-histone contacts within a nucleosome in an ATP-dependent manner. Also orchestrates the RAD51-RAD54 complex formation and thereby plays a role in homologous recombination (HR). This chain is Bromodomain-containing protein 9 (Brd9), found in Mus musculus (Mouse).